The sequence spans 1641 residues: Alpha-2-macroglobulin (1641 aa).

The N-terminal stretch at Met-1–Gly-31 is a signal peptide. The N-palmitoyl cysteine moiety is linked to residue Cys-32. A lipid anchor (S-diacylglycerol cysteine) is attached at Cys-32. Positions Cys-1166–Gln-1169 form a cross-link, isoglutamyl cysteine thioester (Cys-Gln).

It belongs to the protease inhibitor I39 (alpha-2-macroglobulin) family. Bacterial alpha-2-macroglobulin subfamily.

It is found in the cell membrane. In terms of biological role, protects the bacterial cell from host peptidases. The sequence is that of Alpha-2-macroglobulin from Xylella fastidiosa (strain 9a5c).